Reading from the N-terminus, the 1872-residue chain is Ral GTPase-activating protein subunit alpha-2 (1872 aa).

The disordered stretch occupies residues 350–370 (DGAGSTEQDKSHSNSSTLSDR). Phosphoserine is present on residues Ser-373, Ser-376, and Ser-379. The span at 445 to 469 (PDKKDVAQEDADKLGLSETDSKEAS) shows a compositional bias: basic and acidic residues. Residues 445-481 (PDKKDVAQEDADKLGLSETDSKEASSESSGHKRSSSW) form a disordered region. At Ser-486 the chain carries Phosphoserine. Ser-696 bears the Phosphoserine; by PKB mark. Disordered stretches follow at residues 711–730 (FRSATTSGAPGVEKARNTVR) and 758–813 (QQVP…GITM). Thr-715 is subject to Phosphothreonine; by PKB. 2 stretches are compositionally biased toward polar residues: residues 758–768 (QQVPRSSSTSD) and 775–795 (SDSSQGQKVEHSQNLSSSEPK). Basic and acidic residues predominate over residues 796 to 810 (SVQESKGHVTHEHEG). A phosphoserine mark is found at Ser-819 and Ser-820. Residues 831–851 (QQAHGRCRQRQTSESTGSDTV) are disordered. The segment covering 840 to 849 (RQTSESTGSD) has biased composition (polar residues). Ser-1592 carries the phosphoserine modification. Residues 1634–1842 (LKNLDSRQCR…EERALYLEAI (209 aa)) enclose the Rap-GAP domain.

Component of the heterodimeric RalGAP2 complex with RALGAPB. Heterodimerization is required for activity. In terms of tissue distribution, abundantly expressed in testis, pancreas, lung, thymus, brown fat, and white fat.

It localises to the cytoplasm. Its function is as follows. Catalytic subunit of the heterodimeric RalGAP2 complex which acts as a GTPase activator for the Ras-like small GTPases RALA and RALB. This Mus musculus (Mouse) protein is Ral GTPase-activating protein subunit alpha-2 (Ralgapa2).